Reading from the N-terminus, the 95-residue chain is Integration host factor subunit beta (95 aa).

Residues 56–76 (RAPRTGRNPKTGTSVDLDGKY) are disordered.

This sequence belongs to the bacterial histone-like protein family. Heterodimer of an alpha and a beta chain.

This protein is one of the two subunits of integration host factor, a specific DNA-binding protein that functions in genetic recombination as well as in transcriptional and translational control. This Shewanella sediminis (strain HAW-EB3) protein is Integration host factor subunit beta.